The primary structure comprises 340 residues: Heat-inducible transcription repressor HrcA (340 aa).

Belongs to the HrcA family.

Negative regulator of class I heat shock genes (grpE-dnaK-dnaJ and groELS operons). Prevents heat-shock induction of these operons. The chain is Heat-inducible transcription repressor HrcA from Burkholderia vietnamiensis (strain G4 / LMG 22486) (Burkholderia cepacia (strain R1808)).